Consider the following 137-residue polypeptide: MPTINQLVRKPRQSKIKKSTSPALNKGLNSFKRELTDVNSPQKRGVCTRVGTMTPKKPNSALRKYARVRLSNGIEVTAYIPGIGHNLQEHSVVLIRGGRVKDLPGVRYHIVRGALDTAGVENRGQSRSKYGTKKPKK.

Residues Met1–Lys26 are disordered. The segment covering Arg9–Lys18 has biased composition (basic residues).

The protein belongs to the universal ribosomal protein uS12 family. In terms of assembly, part of the 30S ribosomal subunit. Contacts proteins S8 and S17. May interact with IF1 in the 30S initiation complex.

In terms of biological role, with S4 and S5 plays an important role in translational accuracy. Interacts with and stabilizes bases of the 16S rRNA that are involved in tRNA selection in the A site and with the mRNA backbone. Located at the interface of the 30S and 50S subunits, it traverses the body of the 30S subunit contacting proteins on the other side and probably holding the rRNA structure together. The combined cluster of proteins S8, S12 and S17 appears to hold together the shoulder and platform of the 30S subunit. This chain is Small ribosomal subunit protein uS12, found in Listeria innocua serovar 6a (strain ATCC BAA-680 / CLIP 11262).